Consider the following 293-residue polypeptide: MVEHYSVLHREVLEFTKDLKEGYFIDATVGGGGHSYLILKQNPKLKIIGVDKDDYALEVAKERLKDFEGRFSLVKSSFKDIDKIVKDLDVNPVVGILFDFGVSHFQLKLPRGFSFQREEPLDMRMDTSSELTAYYVVNYYPESRLFNIISKYGEEKFAKRIAKNIVEYRKKKKIETTKELADIVYRSYPPNLRHSRIHPATKTFQAIRIEVNNELLEIEEALEKAIHIVSKEGIIITISFHSLEDRIVKNTFKKYKELKFLDILTKKPITPKEDEIRENPASRSAKMRVARRL.

Residues 32–34 (GGH), D51, F78, D99, and Q106 each bind S-adenosyl-L-methionine. The segment at 274-293 (DEIRENPASRSAKMRVARRL) is disordered.

Belongs to the methyltransferase superfamily. RsmH family.

It is found in the cytoplasm. It catalyses the reaction cytidine(1402) in 16S rRNA + S-adenosyl-L-methionine = N(4)-methylcytidine(1402) in 16S rRNA + S-adenosyl-L-homocysteine + H(+). Specifically methylates the N4 position of cytidine in position 1402 (C1402) of 16S rRNA. This Sulfurihydrogenibium azorense (strain DSM 15241 / OCM 825 / Az-Fu1) protein is Ribosomal RNA small subunit methyltransferase H.